Consider the following 391-residue polypeptide: Phosphoglycerate kinase (391 aa).

Substrate-binding positions include 21–23 (DFN), Arg36, 59–62 (HLGR), Arg113, and Arg146. Residues Lys197, Glu319, and 345-348 (GGDT) each bind ATP.

Belongs to the phosphoglycerate kinase family. Monomer.

Its subcellular location is the cytoplasm. The catalysed reaction is (2R)-3-phosphoglycerate + ATP = (2R)-3-phospho-glyceroyl phosphate + ADP. The protein operates within carbohydrate degradation; glycolysis; pyruvate from D-glyceraldehyde 3-phosphate: step 2/5. This is Phosphoglycerate kinase from Methylococcus capsulatus (strain ATCC 33009 / NCIMB 11132 / Bath).